Reading from the N-terminus, the 511-residue chain is 3-octaprenyl-4-hydroxybenzoate carboxy-lyase (511 aa).

Mn(2+) is bound at residue Asn-176. Prenylated FMN contacts are provided by residues 179–181 (IYR), 193–195 (RWL), and 198–199 (RG). Mn(2+) is bound at residue Glu-242. Asp-311 functions as the Proton donor in the catalytic mechanism.

The protein belongs to the UbiD family. Homohexamer. Prenylated FMN is required as a cofactor. Mn(2+) serves as cofactor.

The protein resides in the cell membrane. The enzyme catalyses a 4-hydroxy-3-(all-trans-polyprenyl)benzoate + H(+) = a 2-(all-trans-polyprenyl)phenol + CO2. Its pathway is cofactor biosynthesis; ubiquinone biosynthesis. Catalyzes the decarboxylation of 3-octaprenyl-4-hydroxy benzoate to 2-octaprenylphenol, an intermediate step in ubiquinone biosynthesis. The polypeptide is 3-octaprenyl-4-hydroxybenzoate carboxy-lyase (Laribacter hongkongensis (strain HLHK9)).